A 136-amino-acid chain; its full sequence is NADPH-dependent 7-cyano-7-deazaguanine reductase (136 aa).

Residue C53 is the Thioimide intermediate of the active site. D60 serves as the catalytic Proton donor. Substrate contacts are provided by residues 75–77 (VEL) and 94–95 (HE).

It belongs to the GTP cyclohydrolase I family. QueF type 1 subfamily.

It is found in the cytoplasm. The catalysed reaction is 7-aminomethyl-7-carbaguanine + 2 NADP(+) = 7-cyano-7-deazaguanine + 2 NADPH + 3 H(+). It participates in tRNA modification; tRNA-queuosine biosynthesis. Its function is as follows. Catalyzes the NADPH-dependent reduction of 7-cyano-7-deazaguanine (preQ0) to 7-aminomethyl-7-deazaguanine (preQ1). The protein is NADPH-dependent 7-cyano-7-deazaguanine reductase of Nostoc sp. (strain PCC 7120 / SAG 25.82 / UTEX 2576).